We begin with the raw amino-acid sequence, 270 residues long: Gene 1 protein (270 aa).

A disordered region spans residues 225 to 249 (WAEEDPPVAAVPLEPEDATAPGKEP).

The protein is Gene 1 protein (1) of Mycobacterium (Mycobacteriophage D29).